A 393-amino-acid polypeptide reads, in one-letter code: NAD(P)H-quinone oxidoreductase subunit H, chloroplastic (393 aa).

The protein belongs to the complex I 49 kDa subunit family. As to quaternary structure, NDH is composed of at least 16 different subunits, 5 of which are encoded in the nucleus.

It localises to the plastid. The protein resides in the chloroplast thylakoid membrane. The enzyme catalyses a plastoquinone + NADH + (n+1) H(+)(in) = a plastoquinol + NAD(+) + n H(+)(out). It catalyses the reaction a plastoquinone + NADPH + (n+1) H(+)(in) = a plastoquinol + NADP(+) + n H(+)(out). Its function is as follows. NDH shuttles electrons from NAD(P)H:plastoquinone, via FMN and iron-sulfur (Fe-S) centers, to quinones in the photosynthetic chain and possibly in a chloroplast respiratory chain. The immediate electron acceptor for the enzyme in this species is believed to be plastoquinone. Couples the redox reaction to proton translocation, and thus conserves the redox energy in a proton gradient. The polypeptide is NAD(P)H-quinone oxidoreductase subunit H, chloroplastic (Nicotiana sylvestris (Wood tobacco)).